The primary structure comprises 573 residues: Proline--tRNA ligase (573 aa).

This sequence belongs to the class-II aminoacyl-tRNA synthetase family. ProS type 1 subfamily. In terms of assembly, homodimer.

It is found in the cytoplasm. The enzyme catalyses tRNA(Pro) + L-proline + ATP = L-prolyl-tRNA(Pro) + AMP + diphosphate. Its function is as follows. Catalyzes the attachment of proline to tRNA(Pro) in a two-step reaction: proline is first activated by ATP to form Pro-AMP and then transferred to the acceptor end of tRNA(Pro). As ProRS can inadvertently accommodate and process non-cognate amino acids such as alanine and cysteine, to avoid such errors it has two additional distinct editing activities against alanine. One activity is designated as 'pretransfer' editing and involves the tRNA(Pro)-independent hydrolysis of activated Ala-AMP. The other activity is designated 'posttransfer' editing and involves deacylation of mischarged Ala-tRNA(Pro). The misacylated Cys-tRNA(Pro) is not edited by ProRS. The polypeptide is Proline--tRNA ligase (Geobacter sp. (strain M21)).